The sequence spans 628 residues: E3 SUMO-protein ligase PIAS3 (628 aa).

The interval 1–200 (MAELGELKHM…QLRFCLCETS (200 aa)) is interaction with CCAR2. In terms of domain architecture, SAP spans 11 to 45 (VMSFRVSELQVLLGFAGRNKSGRKHELLAKALHLL). The LXXLL motif motif lies at 19 to 23 (LQVLL). Residues K46 and K56 each participate in a glycyl lysine isopeptide (Lys-Gly) (interchain with G-Cter in SUMO2) cross-link. The segment at 72–95 (PSDLSLLSLPPGTSPVGSPSPLAS) is disordered. One can recognise a PINIT domain in the interval 115–280 (MHPPLPQPVH…SLSVYLVRQL (166 aa)). Glycyl lysine isopeptide (Lys-Gly) (interchain with G-Cter in SUMO2) cross-links involve residues K230 and K307. Residues 312–393 (PDSEVATTSL…FMEILNSCSD (82 aa)) form an SP-RING-type zinc finger. Zn(2+) contacts are provided by C343, H345, C366, and C369. The tract at residues 450–460 (LTIESSSDEED) is SUMO1-binding. Residues K466 and K482 each participate in a glycyl lysine isopeptide (Lys-Gly) (interchain with G-Cter in SUMO2) cross-link. The disordered stretch occupies residues 573–618 (LAPTLGSSHRSATPAPAPGRVSSIVAPGSSLREGHGGPLPSGPSLT).

It belongs to the PIAS family. In terms of assembly, binds SUMO1 and UBE2I. Interacts with AR, BCL11A, GFI1, HMGA2, IRF1, MITF, NCOA2, as well as with STAT3, after treatment with IL6, CNTF or OSM and with STAT5, after PRL stimulation. Interacts with PLAG1. Interacts with ZFHX3. Interacts with MTA1. Interacts with CCAR2 (via N-terminus). Interacts with TRIM8. Interacts with PRDM1. In terms of processing, sumoylated. Widely expressed, with highest levels in lung, kidney and spleen.

Its subcellular location is the cytoplasm. It localises to the nucleus. The protein localises to the nucleus speckle. It participates in protein modification; protein sumoylation. Functions as an E3-type small ubiquitin-like modifier (SUMO) ligase, stabilizing the interaction between UBE2I and the substrate, and as a SUMO-tethering factor. Plays a crucial role as a transcriptional coregulation in various cellular pathways, including the STAT pathway and the steroid hormone signaling pathway. The effects of this transcriptional coregulation, transactivation or silencing, may vary depending upon the biological context. Enhances the sumoylation of MTA1 and may participate in its paralog-selective sumoylation. Sumoylates CCAR2 which promotes its interaction with SIRT1. Diminishes the sumoylation of ZFHX3 by preventing the colocalization of ZFHX3 with SUMO1 in the nucleus. This chain is E3 SUMO-protein ligase PIAS3 (Pias3), found in Rattus norvegicus (Rat).